We begin with the raw amino-acid sequence, 558 residues long: MVDSGTEARARGKAEAGLQDGISGPATARVNGKTQAEAVAEAELKTESVTQAKAGDGAMTRTHTVTYREAMAVTREVIKVEDTTKTRVMVETKTKPLAERSIVPQTKSKAMPMSRVSTVTKSEVKVVAVIEANIRSYAKSHDKANTGSRPDRREETSIGMKSSDEDEENICSWFWTGEEPSVGSWFWPEEETSLQVYKPLPKIQEKPKPTHKPTLTIKQKVIAWSRARYIVLVPVEGGEQSLPPEGNWTLVETLIETPLGIRPLTKIPPYHGPYYQTLAEIKKQIRQREKYGPNPKACHCKSRGFSLEPKEFDKLVALLKLTKDPFIHEIATMIMGISPAYPFTQDIIHDVGITVMIENLVNNPNVKEHPGALSMVDDSSESSEEPKSGESYIHQVCKGIISCPLNSPVQLAGLKLLGHLSIKFEDHYVITSYIPDFLTLLNKGSVKTKFYVLKVFSCLSKNHANTRELISAKVLSSLVAPFNKNESKANILNIIEIFENINFQFKTKAKLFTKEKFTKSELISIFQEAKQFGQKLQDLAEHSDPEVRDKVIRLILKL.

Composition is skewed to basic and acidic residues over residues 1–14 (MVDSGTEARARGKA) and 139–156 (KSHDKANTGSRPDRREET). Disordered stretches follow at residues 1–35 (MVDSGTEARARGKAEAGLQDGISGPATARVNGKTQ) and 139–165 (KSHDKANTGSRPDRREETSIGMKSSDE). Residues 300-339 (CKSRGFSLEPKEFDKLVALLKLTKDPFIHEIATMIMGISP) form an ARM 1 repeat. Residues 369 to 388 (HPGALSMVDDSSESSEEPKS) are disordered. ARM repeat units follow at residues 422–461 (IKFEDHYVITSYIPDFLTLLNKGSVKTKFYVLKVFSCLSK), 463–503 (HANT…NINF), and 520–558 (SELISIFQEAKQFGQKLQDLAEHSDPEVRDKVIRLILKL).

The protein belongs to the eutherian X-chromosome-specific Armcx family.

The protein is Armadillo repeat-containing X-linked protein 5 (ARMCX5) of Homo sapiens (Human).